The chain runs to 681 residues: DNA-directed RNA polymerase subunit beta' (681 aa).

Zn(2+) contacts are provided by C69, C71, C87, and C90. D489, D491, and D493 together coordinate Mg(2+).

It belongs to the RNA polymerase beta' chain family. RpoC1 subfamily. In terms of assembly, in plastids the minimal PEP RNA polymerase catalytic core is composed of four subunits: alpha, beta, beta', and beta''. When a (nuclear-encoded) sigma factor is associated with the core the holoenzyme is formed, which can initiate transcription. It depends on Mg(2+) as a cofactor. The cofactor is Zn(2+).

It is found in the plastid. The protein resides in the chloroplast. The enzyme catalyses RNA(n) + a ribonucleoside 5'-triphosphate = RNA(n+1) + diphosphate. Functionally, DNA-dependent RNA polymerase catalyzes the transcription of DNA into RNA using the four ribonucleoside triphosphates as substrates. This Cycas taitungensis (Prince sago) protein is DNA-directed RNA polymerase subunit beta'.